We begin with the raw amino-acid sequence, 152 residues long: MGALDSLSEYISDYFRVTRKRRKRKVMQTVNIKVKMDCDGCERRVKNAVSSMKGVKSVEVNRKIHKVTVSGYVEPKKVLKRIERTGKKAEIWPYVPYNMVAYPYAVGTYDKKAPAGYVRKSEQSQLQLLPGAPENHYISLFSDENPNACTVM.

The HMA domain occupies Met-27 to Glu-90. Cd(2+) is bound by residues Cys-38 and Cys-41. Cys-149 bears the Cysteine methyl ester mark. Cys-149 is lipidated: S-farnesyl cysteine. A propeptide spans Thr-150 to Met-152 (removed in mature form).

The protein belongs to the HIPP family. Interacts with ZHD11/HB29. Expressed in roots, shoot apical meristem, leaves and flowers.

The protein resides in the membrane. In terms of biological role, heavy-metal-binding protein. Binds cadmium. May be involved in cadmium transport and play a role in cadmium detoxification. The polypeptide is Heavy metal-associated isoprenylated plant protein 20 (Arabidopsis thaliana (Mouse-ear cress)).